Reading from the N-terminus, the 147-residue chain is Hemoglobin subunit beta-1 (147 aa).

The 145-residue stretch at 3–147 (NLTAKERQLI…IADALGKGYH (145 aa)) folds into the Globin domain. Heme b contacts are provided by His-64 and His-93.

The protein belongs to the globin family. In terms of assembly, heterotetramer of two alpha chains and two beta chains. As to expression, red blood cells.

Functionally, involved in oxygen transport from the lung to the various peripheral tissues. This Xenopus tropicalis (Western clawed frog) protein is Hemoglobin subunit beta-1 (hbb1).